Here is a 203-residue protein sequence, read N- to C-terminus: Dual-action ribosomal maturation protein DarP (203 aa).

Disordered regions lie at residues 1 to 31 (MRPM…SKSQ) and 183 to 203 (GASD…DDEA). The span at 186-203 (DSDDEAAGDAGDDHDDEA) shows a compositional bias: acidic residues.

It belongs to the DarP family.

The protein resides in the cytoplasm. Its function is as follows. Member of a network of 50S ribosomal subunit biogenesis factors which assembles along the 30S-50S interface, preventing incorrect 23S rRNA structures from forming. Promotes peptidyl transferase center (PTC) maturation. The chain is Dual-action ribosomal maturation protein DarP from Burkholderia cenocepacia (strain ATCC BAA-245 / DSM 16553 / LMG 16656 / NCTC 13227 / J2315 / CF5610) (Burkholderia cepacia (strain J2315)).